A 139-amino-acid chain; its full sequence is Phosphoribosyl-AMP cyclohydrolase (139 aa).

Asp-91 provides a ligand contact to Mg(2+). Position 92 (Cys-92) interacts with Zn(2+). Mg(2+)-binding residues include Asp-93 and Asp-95. Zn(2+) contacts are provided by Cys-110 and Cys-117.

It belongs to the PRA-CH family. Homodimer. Requires Mg(2+) as cofactor. It depends on Zn(2+) as a cofactor.

Its subcellular location is the cytoplasm. It catalyses the reaction 1-(5-phospho-beta-D-ribosyl)-5'-AMP + H2O = 1-(5-phospho-beta-D-ribosyl)-5-[(5-phospho-beta-D-ribosylamino)methylideneamino]imidazole-4-carboxamide. The protein operates within amino-acid biosynthesis; L-histidine biosynthesis; L-histidine from 5-phospho-alpha-D-ribose 1-diphosphate: step 3/9. In terms of biological role, catalyzes the hydrolysis of the adenine ring of phosphoribosyl-AMP. The sequence is that of Phosphoribosyl-AMP cyclohydrolase from Brucella canis (strain ATCC 23365 / NCTC 10854 / RM-666).